The chain runs to 266 residues: MATKILALLALLALFVSATNAFIIPQCSLAPSAIIPQFLRPVTSMGFEHLAVQAYKLQQALAASVLQQPINQLQQQSLAHLTIQTIATQQQQQFLPALSQLDVVNPVAYLQQQVLASNPLALANVAAYQQQQQLQQFLPALSQLAMVNPAAYLQQQQLLSSSPLVVGNAPTYLQQQLLQQIVPALTQLAVANPAAYLQQLLPFNQLTVSNSAAYLQQRQQLLNPLAVPNPLVTAFLQQQQLLPYSQFSLMNPALSWQQPIVGGAIF.

The signal sequence occupies residues 1 to 21; the sequence is MATKILALLALLALFVSATNA.

It belongs to the zein family.

Its function is as follows. Zeins are major seed storage proteins. This chain is 22 kDa alpha-zein 8, found in Zea mays (Maize).